A 393-amino-acid polypeptide reads, in one-letter code: Phosphopentomutase (393 aa).

Asp-14, Asp-287, His-292, Asp-328, His-329, and His-340 together coordinate Mn(2+).

It belongs to the phosphopentomutase family. Mn(2+) serves as cofactor.

The protein localises to the cytoplasm. The catalysed reaction is 2-deoxy-alpha-D-ribose 1-phosphate = 2-deoxy-D-ribose 5-phosphate. It catalyses the reaction alpha-D-ribose 1-phosphate = D-ribose 5-phosphate. Its pathway is carbohydrate degradation; 2-deoxy-D-ribose 1-phosphate degradation; D-glyceraldehyde 3-phosphate and acetaldehyde from 2-deoxy-alpha-D-ribose 1-phosphate: step 1/2. Its function is as follows. Isomerase that catalyzes the conversion of deoxy-ribose 1-phosphate (dRib-1-P) and ribose 1-phosphate (Rib-1-P) to deoxy-ribose 5-phosphate (dRib-5-P) and ribose 5-phosphate (Rib-5-P), respectively. The sequence is that of Phosphopentomutase from Geobacillus stearothermophilus (Bacillus stearothermophilus).